A 202-amino-acid chain; its full sequence is MENLIIYAFIYLLGSIPFGLILAKFFAKTDIKKEGSKSIGATNVLRVVKEKNPKLAKKLAIATIILDFAKAAIPLLILKFLHYDQALLWSVAVLAIFGHCFSIYLLFEGGKGIATGAGAMIVLLPLEVLTAFIVWVVIGKIFKISSLASLAALLAFVISSFIFNYDLEIHTHAPVFIIAFIIVYKHLPNIKRLIFKEECKVI.

6 consecutive transmembrane segments (helical) span residues 3–23 (NLII…LILA), 61–81 (IATI…LKFL), 87–107 (LLWS…YLLF), 118–138 (GAMI…WVVI), 144–164 (ISSL…FIFN), and 167–187 (LEIH…YKHL).

The protein belongs to the PlsY family. Probably interacts with PlsX.

Its subcellular location is the cell inner membrane. It carries out the reaction an acyl phosphate + sn-glycerol 3-phosphate = a 1-acyl-sn-glycero-3-phosphate + phosphate. Its pathway is lipid metabolism; phospholipid metabolism. In terms of biological role, catalyzes the transfer of an acyl group from acyl-phosphate (acyl-PO(4)) to glycerol-3-phosphate (G3P) to form lysophosphatidic acid (LPA). This enzyme utilizes acyl-phosphate as fatty acyl donor, but not acyl-CoA or acyl-ACP. This is Glycerol-3-phosphate acyltransferase from Campylobacter jejuni subsp. jejuni serotype O:6 (strain 81116 / NCTC 11828).